Consider the following 351-residue polypeptide: uncharacterized protein (351 aa).

Mn(2+) contacts are provided by D215, D226, H290, E319, and E333.

The protein belongs to the peptidase M24B family. It depends on Mn(2+) as a cofactor.

This is an uncharacterized protein from Staphylococcus haemolyticus (strain JCSC1435).